Reading from the N-terminus, the 427-residue chain is Adenylosuccinate synthetase (427 aa).

Residues 12–18 (GDEGKGK) and 40–42 (GHT) contribute to the GTP site. D13 functions as the Proton acceptor in the catalytic mechanism. Residues D13 and G40 each coordinate Mg(2+). Residues 13-16 (DEGK), 38-41 (NAGH), T126, R140, Q221, T236, and R299 each bind IMP. Residue H41 is the Proton donor of the active site. 295–301 (STTKRPR) contributes to the substrate binding site. Residues R301, 327 to 329 (KLD), and 409 to 411 (SVG) contribute to the GTP site.

The protein belongs to the adenylosuccinate synthetase family. In terms of assembly, homodimer. It depends on Mg(2+) as a cofactor.

It localises to the cytoplasm. It catalyses the reaction IMP + L-aspartate + GTP = N(6)-(1,2-dicarboxyethyl)-AMP + GDP + phosphate + 2 H(+). The protein operates within purine metabolism; AMP biosynthesis via de novo pathway; AMP from IMP: step 1/2. Its function is as follows. Plays an important role in the de novo pathway of purine nucleotide biosynthesis. Catalyzes the first committed step in the biosynthesis of AMP from IMP. The polypeptide is Adenylosuccinate synthetase (Borrelia recurrentis (strain A1)).